A 193-amino-acid chain; its full sequence is Ion-translocating oxidoreductase complex subunit A (193 aa).

6 consecutive transmembrane segments (helical) span residues Leu5–Leu25, Ile39–Val59, Phe62–Ala82, Leu102–Leu122, Ala134–Ile154, and Ser171–Val191.

It belongs to the NqrDE/RnfAE family. As to quaternary structure, the complex is composed of six subunits: RnfA, RnfB, RnfC, RnfD, RnfE and RnfG.

The protein resides in the cell inner membrane. Part of a membrane-bound complex that couples electron transfer with translocation of ions across the membrane. The polypeptide is Ion-translocating oxidoreductase complex subunit A (Yersinia pestis (strain Pestoides F)).